Consider the following 191-residue polypeptide: MKIVLASKSPRRRELLSNLGLDFEVIESNVEEFSSEKHPSRYVMDLSFNKAMSVAKKLKEEAIVIGADTIVVIEDKVLGKPKDRDEAFIMLKNLQGRVHTVYTGITIVRTKDFKYVSDFEETKVWIKKLEDEEIFNYIDTGEGYDKAGAYAIQGVGALIVEKIEGDYFNVVGLPISKLFDILKREFDVRLL.

The active-site Proton acceptor is the Asp-68.

This sequence belongs to the Maf family. YhdE subfamily. It depends on a divalent metal cation as a cofactor.

It is found in the cytoplasm. The enzyme catalyses dTTP + H2O = dTMP + diphosphate + H(+). The catalysed reaction is UTP + H2O = UMP + diphosphate + H(+). In terms of biological role, nucleoside triphosphate pyrophosphatase that hydrolyzes dTTP and UTP. May have a dual role in cell division arrest and in preventing the incorporation of modified nucleotides into cellular nucleic acids. This is dTTP/UTP pyrophosphatase from Thermoanaerobacter pseudethanolicus (strain ATCC 33223 / 39E) (Clostridium thermohydrosulfuricum).